The primary structure comprises 383 residues: Arginine biosynthesis bifunctional protein ArgJ (383 aa).

Substrate-binding residues include T146, K168, T179, E259, N378, and S383. T179 acts as the Nucleophile in catalysis.

The protein belongs to the ArgJ family. Heterotetramer of two alpha and two beta chains.

Its subcellular location is the cytoplasm. It carries out the reaction N(2)-acetyl-L-ornithine + L-glutamate = N-acetyl-L-glutamate + L-ornithine. The enzyme catalyses L-glutamate + acetyl-CoA = N-acetyl-L-glutamate + CoA + H(+). It participates in amino-acid biosynthesis; L-arginine biosynthesis; L-ornithine and N-acetyl-L-glutamate from L-glutamate and N(2)-acetyl-L-ornithine (cyclic): step 1/1. Its pathway is amino-acid biosynthesis; L-arginine biosynthesis; N(2)-acetyl-L-ornithine from L-glutamate: step 1/4. Catalyzes two activities which are involved in the cyclic version of arginine biosynthesis: the synthesis of N-acetylglutamate from glutamate and acetyl-CoA as the acetyl donor, and of ornithine by transacetylation between N(2)-acetylornithine and glutamate. This chain is Arginine biosynthesis bifunctional protein ArgJ, found in Streptomyces coelicolor (strain ATCC BAA-471 / A3(2) / M145).